A 283-amino-acid chain; its full sequence is 4-diphosphocytidyl-2-C-methyl-D-erythritol kinase (283 aa).

Lysine 12 is an active-site residue. 99–109 (PLAAGIGGGSA) serves as a coordination point for ATP. The active site involves aspartate 141.

This sequence belongs to the GHMP kinase family. IspE subfamily.

It carries out the reaction 4-CDP-2-C-methyl-D-erythritol + ATP = 4-CDP-2-C-methyl-D-erythritol 2-phosphate + ADP + H(+). The protein operates within isoprenoid biosynthesis; isopentenyl diphosphate biosynthesis via DXP pathway; isopentenyl diphosphate from 1-deoxy-D-xylulose 5-phosphate: step 3/6. In terms of biological role, catalyzes the phosphorylation of the position 2 hydroxy group of 4-diphosphocytidyl-2C-methyl-D-erythritol. This is 4-diphosphocytidyl-2-C-methyl-D-erythritol kinase from Sphingopyxis alaskensis (strain DSM 13593 / LMG 18877 / RB2256) (Sphingomonas alaskensis).